We begin with the raw amino-acid sequence, 356 residues long: Dual-specificity RNA methyltransferase RlmN (356 aa).

E89 acts as the Proton acceptor in catalysis. Positions 108-341 (SHARYTICVS…CTIRESKGLD (234 aa)) constitute a Radical SAM core domain. A disulfide bridge connects residues C115 and C346. [4Fe-4S] cluster-binding residues include C122, C126, and C129. S-adenosyl-L-methionine is bound by residues 172 to 173 (GE), S204, 227 to 229 (SLH), and N303. Catalysis depends on C346, which acts as the S-methylcysteine intermediate.

The protein belongs to the radical SAM superfamily. RlmN family. [4Fe-4S] cluster is required as a cofactor.

It localises to the cytoplasm. The enzyme catalyses adenosine(2503) in 23S rRNA + 2 reduced [2Fe-2S]-[ferredoxin] + 2 S-adenosyl-L-methionine = 2-methyladenosine(2503) in 23S rRNA + 5'-deoxyadenosine + L-methionine + 2 oxidized [2Fe-2S]-[ferredoxin] + S-adenosyl-L-homocysteine. It carries out the reaction adenosine(37) in tRNA + 2 reduced [2Fe-2S]-[ferredoxin] + 2 S-adenosyl-L-methionine = 2-methyladenosine(37) in tRNA + 5'-deoxyadenosine + L-methionine + 2 oxidized [2Fe-2S]-[ferredoxin] + S-adenosyl-L-homocysteine. Its function is as follows. Specifically methylates position 2 of adenine 2503 in 23S rRNA and position 2 of adenine 37 in tRNAs. m2A2503 modification seems to play a crucial role in the proofreading step occurring at the peptidyl transferase center and thus would serve to optimize ribosomal fidelity. This chain is Dual-specificity RNA methyltransferase RlmN, found in Campylobacter jejuni (strain RM1221).